Here is a 479-residue protein sequence, read N- to C-terminus: Siroheme synthase (479 aa).

The segment at 1 to 202 (MNYLPIFLDL…GRDSEAEAQL (202 aa)) is precorrin-2 dehydrogenase /sirohydrochlorin ferrochelatase. Residues 22–23 (ET) and 43–44 (PA) contribute to the NAD(+) site. Phosphoserine is present on serine 128. Residues 217-479 (GEVYLVGAGP…TPLEAPDHLA (263 aa)) are uroporphyrinogen-III C-methyltransferase. Proline 226 provides a ligand contact to S-adenosyl-L-methionine. Residue aspartate 249 is the Proton acceptor of the active site. Residue lysine 271 is the Proton donor of the active site. Residues 302 to 304 (GGD), isoleucine 307, 332 to 333 (TA), methionine 384, and glycine 413 contribute to the S-adenosyl-L-methionine site.

This sequence in the N-terminal section; belongs to the precorrin-2 dehydrogenase / sirohydrochlorin ferrochelatase family. It in the C-terminal section; belongs to the precorrin methyltransferase family.

The catalysed reaction is uroporphyrinogen III + 2 S-adenosyl-L-methionine = precorrin-2 + 2 S-adenosyl-L-homocysteine + H(+). It catalyses the reaction precorrin-2 + NAD(+) = sirohydrochlorin + NADH + 2 H(+). The enzyme catalyses siroheme + 2 H(+) = sirohydrochlorin + Fe(2+). It participates in cofactor biosynthesis; adenosylcobalamin biosynthesis; precorrin-2 from uroporphyrinogen III: step 1/1. Its pathway is cofactor biosynthesis; adenosylcobalamin biosynthesis; sirohydrochlorin from precorrin-2: step 1/1. It functions in the pathway porphyrin-containing compound metabolism; siroheme biosynthesis; precorrin-2 from uroporphyrinogen III: step 1/1. The protein operates within porphyrin-containing compound metabolism; siroheme biosynthesis; siroheme from sirohydrochlorin: step 1/1. It participates in porphyrin-containing compound metabolism; siroheme biosynthesis; sirohydrochlorin from precorrin-2: step 1/1. Multifunctional enzyme that catalyzes the SAM-dependent methylations of uroporphyrinogen III at position C-2 and C-7 to form precorrin-2 via precorrin-1. Then it catalyzes the NAD-dependent ring dehydrogenation of precorrin-2 to yield sirohydrochlorin. Finally, it catalyzes the ferrochelation of sirohydrochlorin to yield siroheme. The polypeptide is Siroheme synthase (Thiobacillus denitrificans (strain ATCC 25259 / T1)).